We begin with the raw amino-acid sequence, 92 residues long: uncharacterized protein (92 aa).

The protein belongs to the IUNH family.

This is an uncharacterized protein from Corynebacterium ammoniagenes (Brevibacterium ammoniagenes).